A 94-amino-acid polypeptide reads, in one-letter code: Beta-diguetoxin-Dc1a (94 aa).

Residues Met1–Ala17 form the signal peptide. The propeptide occupies Leu18–Arg38. Intrachain disulfides connect Cys50–Cys63, Cys57–Cys77, Cys62–Cys91, and Cys79–Cys89.

Belongs to the neurotoxin 26 (DTX) family. Expressed by the venom gland.

It is found in the secreted. Insecticidal toxin. This toxin promotes opening of insect Nav channels. The toxin binds to the S1-S2 and S3-S4 loops in the domain II voltage-sensor of insect Nav channels (i.e., receptor site 4). The American cockroach P.americana is largely resistant to the effects of this toxin due to an unusual sequence within the domain II S1-S2 loop. In vivo, paralyzes lepidopteran and dipteran larvae. Paralyzed insects ultimately die from secondary effects of starvation and dehydration. The chain is Beta-diguetoxin-Dc1a from Diguetia canities (Desert bush spider).